The following is a 735-amino-acid chain: MAWPWRRRRWRWRRRRPRWRRWRRRRTWRRRPRRAVRRRRVRRRGRGWRRLYRRYRRRRGRRTYKKKPVLTQWQPTVRRRCFIIGYMPLIICGENLTSKNYASHADDFVKDGPFGGGMTTMQFSLRILYDEFLRFLNIWTHSNQDLDLARYHGFKLTLYRHPTVDFIVIIRNSPPFEDTELTGPNTHPGMLMLRHKKILVPSLRTRPSRRHKITVRIGPPKLFEDKWYSQTDICDVILATVYATACDLQYPFGSPLTENYCISFQVLGSAYNNLISNTLNPNEEQQDIKSAIYNNVNAYLTRITESHMANLISKAPPKQVLKSSDGSLQTDHNDTQFGGNPYNTNQFTTTTVNKIIQGAQNYLTTIKTHLQPNNSAINPNTQWHLEYHAGIYSAPFLSAGRLNPEIKGLYTDITYNPMMDKGTGNKIWCDSLTKADMKYTEGRSKYLIENLPLWAAVWGYLDYCTKTSGDAAFHYNYRVTLISPYTSPMLFNPQDPTKGFVPYSLNFGLGKMPGGKGYVPLRMRANWYPYFFHQQKVLEAIGMSGPFTYRSDEKKAVLTSRYKFKFTWGGNPVSHQVVRNPCKGTGGASASRKPRSVQVTDPKYNTPEITTHTWDIRRGWFGKRFIDRVQQQQASPELLADPPKRPRKEIKGLTEADQEAEKDSGLRLRQVQPWMSSQETQSEQESAPEEQTVEQQLRNQLHTQQLLGFQLRSLMYQVQQTHRNSFIHPLLLPRA.

Disordered stretches follow at residues 577-604 (VVRNPCKGTGGASASRKPRSVQVTDPKY) and 632-695 (QQAS…TVEQ). Residues 649-666 (EIKGLTEADQEAEKDSGL) are compositionally biased toward basic and acidic residues. Positions 676–685 (SSQETQSEQE) are enriched in low complexity.

The protein belongs to the anelloviridae capsid protein family.

It localises to the virion. Its function is as follows. Self assemble to form an icosahedral capsid. This chain is Capsid protein, found in Pan troglodytes (Chimpanzee).